The chain runs to 156 residues: Transcription elongation factor GreA (156 aa).

Residues 7 to 27 are a coiled coil; it reads MTQEGLDKLKLELENLKLVKR.

This sequence belongs to the GreA/GreB family.

Necessary for efficient RNA polymerase transcription elongation past template-encoded arresting sites. The arresting sites in DNA have the property of trapping a certain fraction of elongating RNA polymerases that pass through, resulting in locked ternary complexes. Cleavage of the nascent transcript by cleavage factors such as GreA or GreB allows the resumption of elongation from the new 3'terminus. GreA releases sequences of 2 to 3 nucleotides. The sequence is that of Transcription elongation factor GreA from Lactococcus lactis subsp. lactis (strain IL1403) (Streptococcus lactis).